Reading from the N-terminus, the 158-residue chain is Phosphopantetheine adenylyltransferase (158 aa).

T8 serves as a coordination point for substrate. ATP contacts are provided by residues 8–9 (TF) and H16. Substrate is bound by residues K40, L72, and R86. Residues 87 to 89 (GLR), E97, and 122 to 128 (HAFISSS) contribute to the ATP site.

The protein belongs to the bacterial CoaD family. In terms of assembly, homohexamer. Mg(2+) serves as cofactor.

It is found in the cytoplasm. It catalyses the reaction (R)-4'-phosphopantetheine + ATP + H(+) = 3'-dephospho-CoA + diphosphate. It participates in cofactor biosynthesis; coenzyme A biosynthesis; CoA from (R)-pantothenate: step 4/5. In terms of biological role, reversibly transfers an adenylyl group from ATP to 4'-phosphopantetheine, yielding dephospho-CoA (dPCoA) and pyrophosphate. In Campylobacter jejuni subsp. jejuni serotype O:6 (strain 81116 / NCTC 11828), this protein is Phosphopantetheine adenylyltransferase.